The following is a 107-amino-acid chain: Ferredoxin (107 aa).

4Fe-4S ferredoxin-type domains lie at 2-30 (TYVV…YEGE) and 31-60 (FMLV…PETP). Positions 9 and 17 each coordinate [3Fe-4S] cluster. 4 residues coordinate [4Fe-4S] cluster: cysteine 21, cysteine 40, cysteine 43, and cysteine 46. A [3Fe-4S] cluster-binding site is contributed by cysteine 50.

Requires [4Fe-4S] cluster as cofactor. [3Fe-4S] cluster serves as cofactor.

Functionally, ferredoxins are iron-sulfur proteins that transfer electrons in a wide variety of metabolic reactions. This Rickettsia bellii (strain RML369-C) protein is Ferredoxin (fdxA).